We begin with the raw amino-acid sequence, 286 residues long: Formamidopyrimidine-DNA glycosylase (286 aa).

The active-site Schiff-base intermediate with DNA is the Pro2. Glu3 serves as the catalytic Proton donor. The active-site Proton donor; for beta-elimination activity is the Lys61. The DNA site is built by His103, Arg122, and Arg164. Residues Asn250–Lys284 form an FPG-type zinc finger. The Proton donor; for delta-elimination activity role is filled by Arg274.

It belongs to the FPG family. Monomer. The cofactor is Zn(2+).

It carries out the reaction Hydrolysis of DNA containing ring-opened 7-methylguanine residues, releasing 2,6-diamino-4-hydroxy-5-(N-methyl)formamidopyrimidine.. It catalyses the reaction 2'-deoxyribonucleotide-(2'-deoxyribose 5'-phosphate)-2'-deoxyribonucleotide-DNA = a 3'-end 2'-deoxyribonucleotide-(2,3-dehydro-2,3-deoxyribose 5'-phosphate)-DNA + a 5'-end 5'-phospho-2'-deoxyribonucleoside-DNA + H(+). Its function is as follows. Involved in base excision repair of DNA damaged by oxidation or by mutagenic agents. Acts as a DNA glycosylase that recognizes and removes damaged bases. Has a preference for oxidized purines, such as 7,8-dihydro-8-oxoguanine (8-oxoG). Has AP (apurinic/apyrimidinic) lyase activity and introduces nicks in the DNA strand. Cleaves the DNA backbone by beta-delta elimination to generate a single-strand break at the site of the removed base with both 3'- and 5'-phosphates. In Corynebacterium glutamicum (strain ATCC 13032 / DSM 20300 / JCM 1318 / BCRC 11384 / CCUG 27702 / LMG 3730 / NBRC 12168 / NCIMB 10025 / NRRL B-2784 / 534), this protein is Formamidopyrimidine-DNA glycosylase.